The primary structure comprises 440 residues: Transposon TyH3 Gag polyprotein (440 aa).

3 stretches are compositionally biased toward polar residues: residues 1 to 23 (MESQ…SVTS), 48 to 60 (TKAN…TPAS), and 127 to 152 (QSQF…GNTF). Disordered stretches follow at residues 1–93 (MESQ…MMTQ), 126–173 (PQSQ…RPPP), and 352–440 (GSRN…PETY). A compositionally biased stretch (low complexity) spans 153 to 165 (TDSSSADSDMTST). The interval 299-401 (NNGIHINNKV…NSKSKTARAH (103 aa)) is RNA-binding. Residues 402–418 (NVSTSNNSPSTDNDSIS) show a composition bias toward low complexity. Phosphoserine is present on S416. Over residues 419-428 (KSTTEPIQLN) the composition is skewed to polar residues. Residues 429-440 (NKHDLHLRPETY) show a composition bias toward basic and acidic residues.

As to quaternary structure, homotrimer.

It is found in the cytoplasm. Functionally, capsid protein (CA) is the structural component of the virus-like particle (VLP), forming the shell that encapsulates the retrotransposons dimeric RNA genome. The particles are assembled from trimer-clustered units and there are holes in the capsid shells that allow for the diffusion of macromolecules. CA also has nucleocapsid-like chaperone activity, promoting primer tRNA(i)-Met annealing to the multipartite primer-binding site (PBS), dimerization of Ty1 RNA and initiation of reverse transcription. The chain is Transposon TyH3 Gag polyprotein (TY1A) from Saccharomyces cerevisiae (Baker's yeast).